Here is a 341-residue protein sequence, read N- to C-terminus: Heme A synthase (341 aa).

Helical transmembrane passes span 7-27, 92-112, 118-138, 159-179, 190-210, 253-273, 280-300, and 302-322; these read VTVW…IGGI, LFGR…AITK, MVAK…MGWF, LFLT…CAGV, FFTA…GALV, FLHR…PFWL, LFLA…VSVV, and IFLA…GVHM. H255 is a binding site for heme. H308 contacts heme.

Belongs to the COX15/CtaA family. Type 2 subfamily. In terms of assembly, interacts with CtaB. It depends on heme b as a cofactor.

The protein resides in the cell membrane. The catalysed reaction is Fe(II)-heme o + 2 A + H2O = Fe(II)-heme a + 2 AH2. Its pathway is porphyrin-containing compound metabolism; heme A biosynthesis; heme A from heme O: step 1/1. In terms of biological role, catalyzes the conversion of heme O to heme A by two successive hydroxylations of the methyl group at C8. The first hydroxylation forms heme I, the second hydroxylation results in an unstable dihydroxymethyl group, which spontaneously dehydrates, resulting in the formyl group of heme A. This is Heme A synthase from Anaplasma marginale (strain St. Maries).